The primary structure comprises 506 residues: Abscisic acid 8'-hydroxylase 2 (506 aa).

The chain crosses the membrane as a helical span at residues 3-23 (FLLFFVFVTAAVLCFVVPAFL). Cys437 contacts heme.

This sequence belongs to the cytochrome P450 family. Requires heme as cofactor. In terms of tissue distribution, in internodes and expanding leaves. Weak expression in seedlings.

Its subcellular location is the membrane. It carries out the reaction 2-cis-(+)-abscisate + reduced [NADPH--hemoprotein reductase] + O2 = (+)-8'-hydroxyabscisate + oxidized [NADPH--hemoprotein reductase] + H2O + H(+). It functions in the pathway plant hormone degradation; abscisic acid degradation. Involved in the oxidative degradation of abscisic acid. This chain is Abscisic acid 8'-hydroxylase 2 (CYP707A6), found in Oryza sativa subsp. indica (Rice).